Consider the following 238-residue polypeptide: Ribosomal RNA small subunit methyltransferase G (238 aa).

Residues G78, F83, A129–E130, and R148 contribute to the S-adenosyl-L-methionine site. The tract at residues K217–K238 is disordered.

Belongs to the methyltransferase superfamily. RNA methyltransferase RsmG family.

The protein resides in the cytoplasm. Functionally, specifically methylates the N7 position of a guanine in 16S rRNA. This chain is Ribosomal RNA small subunit methyltransferase G, found in Lactococcus lactis subsp. cremoris (strain MG1363).